The sequence spans 469 residues: Regulator of G-protein signaling 7 (469 aa).

The region spanning 37–112 is the DEP domain; the sequence is EKNGIPIRTV…DDGTFYRFQT (76 aa). A phosphoserine mark is found at Ser229 and Ser241. A disordered region spans residues 235-256; that stretch reads NDIRSHSPTHTPTPETKPPTED. Residue Thr243 is modified to Phosphothreonine. Residues 255–316 enclose the G protein gamma domain; it reads EDELQQQIKY…LSDDTTFWEL (62 aa). The region spanning 333–448 is the RGS domain; that stretch reads GMDEALKDPV…IRSSAYQELL (116 aa). A Phosphoserine modification is found at Ser434.

As to quaternary structure, interacts with GNB5, forming the RGS7-GNB5 complex. Interacts with GPR158; promotes the GTPase activator activity of the RGS7-GNB5 complex in absence of glycine, in contrast GTPase activator activity of the RGS7-GNB5 complex is inhibited in presence of glycine. Interacts with GPR179. Interacts with PKD1; this prevents rapid proteasomal degradation. Interacts with RGS7BP, leading to regulate the subcellular location of the heterodimer formed with GNB5. Interacts (phosphorylated form) with 14-3-3 protein YWHAQ. Interacts with SNAPIN. Interacts with GNAI1. Interacts with GNAO1, GNAI3 and GNAZ. Palmitoylated. In terms of processing, ubiquitinated, leading to rapid proteasomal degradation. Post-translationally, phosphorylation and subsequent interaction with 14-3-3 proteins inhibits GAP activity. Detected in retina (at protein level).

Its subcellular location is the cytoplasm. It is found in the cytosol. The protein localises to the cell membrane. It localises to the membrane. Its function is as follows. GTPase activator component of the RGS7-GNB5 complex that regulates G protein-coupled receptor signaling cascades. The RGS7-GNB5 complex acts as an inhibitor signal transduction by promoting the GTPase activity of G protein alpha subunits, such as GNAO1, thereby driving them into their inactive GDP-bound form. May play a role in synaptic vesicle exocytosis. Glycine-dependent regulation of the RGS7-GNB5 complex by GPR158 affects mood and cognition via its ability to regulate neuronal excitability in L2/L3 pyramidal neurons of the prefrontal cortex. Modulates the activity of potassium channels that are activated by GNAO1 in response to muscarinic acetylcholine receptor M2/CHRM2 signaling. The sequence is that of Regulator of G-protein signaling 7 (RGS7) from Bos taurus (Bovine).